The following is a 309-amino-acid chain: Glutaminase (309 aa).

Residues Ser-64, Asn-114, Glu-160, Asn-167, Tyr-191, Tyr-243, and Val-261 each contribute to the substrate site.

The protein belongs to the glutaminase family. Homotetramer.

The catalysed reaction is L-glutamine + H2O = L-glutamate + NH4(+). The polypeptide is Glutaminase (Azorhizobium caulinodans (strain ATCC 43989 / DSM 5975 / JCM 20966 / LMG 6465 / NBRC 14845 / NCIMB 13405 / ORS 571)).